We begin with the raw amino-acid sequence, 448 residues long: Adenylosuccinate synthetase (448 aa).

GTP contacts are provided by residues 22–28 (GDEGKGK) and 50–52 (GHT). The active-site Proton acceptor is the Asp-23. 2 residues coordinate Mg(2+): Asp-23 and Gly-50. Residues 23–26 (DEGK), 48–51 (NAGH), Thr-139, Arg-153, Gln-234, Thr-249, and Arg-321 contribute to the IMP site. His-51 acts as the Proton donor in catalysis. 317–323 (SVTGRPR) lines the substrate pocket. GTP is bound by residues Arg-323, 349–351 (KLD), and 431–433 (STG).

It belongs to the adenylosuccinate synthetase family. Homodimer. It depends on Mg(2+) as a cofactor.

The protein resides in the cytoplasm. The catalysed reaction is IMP + L-aspartate + GTP = N(6)-(1,2-dicarboxyethyl)-AMP + GDP + phosphate + 2 H(+). The protein operates within purine metabolism; AMP biosynthesis via de novo pathway; AMP from IMP: step 1/2. Functionally, plays an important role in the de novo pathway of purine nucleotide biosynthesis. Catalyzes the first committed step in the biosynthesis of AMP from IMP. This Paraburkholderia xenovorans (strain LB400) protein is Adenylosuccinate synthetase.